We begin with the raw amino-acid sequence, 1128 residues long: Phytochrome A (1128 aa).

Residues 1–21 show a composition bias toward low complexity; the sequence is MSSSRPTQCSSSSSRTRQSSR. A disordered region spans residues 1–24; sequence MSSSRPTQCSSSSSRTRQSSRARI. A GAF domain is found at 219-404; sequence SMEVLCNTVV…VFAVHVNKEF (186 aa). Phytochromobilin is bound at residue Cys-324. PAS domains lie at 620-690 and 750-834; these read VTSE…LQGK and VEGD…LAGD. Residues 904-1124 enclose the Histidine kinase domain; the sequence is YMRHAINNPL…TFILSVELAS (221 aa).

It belongs to the phytochrome family. In terms of assembly, homodimer. In terms of processing, contains one covalently linked phytochromobilin chromophore.

Functionally, regulatory photoreceptor which exists in two forms that are reversibly interconvertible by light: the Pr form that absorbs maximally in the red region of the spectrum and the Pfr form that absorbs maximally in the far-red region. Photoconversion of Pr to Pfr induces an array of morphogenic responses, whereas reconversion of Pfr to Pr cancels the induction of those responses. Pfr controls the expression of a number of nuclear genes including those encoding the small subunit of ribulose-bisphosphate carboxylase, chlorophyll A/B binding protein, protochlorophyllide reductase, rRNA, etc. It also controls the expression of its own gene(s) in a negative feedback fashion. This Oryza sativa subsp. indica (Rice) protein is Phytochrome A (PHYA).